Reading from the N-terminus, the 749-residue chain is Signal transducer and activator of transcription 4 (749 aa).

Residues W570–D665 form the SH2 domain. K668 carries the post-translational modification N6-acetyllysine. Y694 is modified (phosphotyrosine; by JAK). S722 is subject to Phosphoserine.

Belongs to the transcription factor STAT family. Forms a homodimer or a heterodimer with a related family member. Interacts with ARL2BP. Interacts with STAT1. Interacts with JUN; this complex efficiently interacts with the AP-1-related sequence of the IFN-gamma promoter. Post-translationally, acetylation at Lys-668 is required for JAK2-mediated phosphorylation and activation of STAT4. Tyrosine phosphorylated upon IL12 and IFN-alpha activation, but not by IFN-gamma in T-lymphocytes and NK cells. Serine phosphorylation is required for maximal transcriptional activity but not for DNA binding. Phosphorylation by MAP2K6 at Ser-722 is required for full transcriptional activity induced by IL12. However this serine phosphorylation is not required for cell proliferation although critical for IFN-gamma production. In terms of tissue distribution, expression is restricted to testis, thymus, and spleen.

Its subcellular location is the cytoplasm. It localises to the nucleus. Its function is as follows. Transcriptional regulator mainly expressed in hematopoietic cells that plays a critical role in cellular growth, differentiation and immune response. Plays a key role in the differentiation of T-helper 1 cells and the production of interferon-gamma. Also participates in multiple neutrophil functions including chemotaxis and production of the neutrophil extracellular traps. After IL12 binding to its receptor IL12RB2, STAT4 interacts with the intracellular domain of IL12RB2 and becomes tyrosine phosphorylated. Phosphorylated STAT4 then homodimerizes and migrates to the nucleus where it can recognize STAT target sequences present in IL12 responsive genes. Although IL12 appears to be the predominant activating signal, STAT4 can also be phosphorylated and activated in response to IFN-gamma stimulation via JAK1 and TYK2 and in response to different interleukins including IL23, IL2 and IL35. Transcription activation of IFN-gamma gene is mediated by interaction with JUN that forms a complex that efficiently interacts with the AP-1-related sequence of the IFN-gamma promoter. In response to IFN-alpha/beta signaling, acts as a transcriptional repressor and suppresses IL5 and IL13 mRNA expression during response to T-cell receptor (TCR) activation. This is Signal transducer and activator of transcription 4 (Stat4) from Mus musculus (Mouse).